The primary structure comprises 90 residues: Sec-independent protein translocase protein TatAo (90 aa).

Residues 8–28 form a helical membrane-spanning segment; sequence FPGLPGGPELLIVLLIVVLLF. A disordered region spans residues 39–90; that stretch reads SSGQAMGEFRRGREEIEEELKKGAEGGDDEGENGDEAEADDADATETEAESR. Residues 46–63 show a composition bias toward basic and acidic residues; sequence EFRRGREEIEEELKKGAE. Positions 64-90 are enriched in acidic residues; sequence GGDDEGENGDEAEADDADATETEAESR.

Belongs to the TatA/E family. In terms of assembly, forms a complex with TatC. Cytoplasmic and membrane-bound TatA form high-molecular-weight complexes.

Its subcellular location is the cell membrane. It localises to the cytoplasm. Part of the twin-arginine translocation (Tat) system that transports large folded proteins containing a characteristic twin-arginine motif in their signal peptide across membranes. TatA could form the protein-conducting channel of the Tat system. This Haloferax volcanii (strain ATCC 29605 / DSM 3757 / JCM 8879 / NBRC 14742 / NCIMB 2012 / VKM B-1768 / DS2) (Halobacterium volcanii) protein is Sec-independent protein translocase protein TatAo.